Here is a 790-residue protein sequence, read N- to C-terminus: Cadherin-6 (790 aa).

The first 18 residues, 1-18, serve as a signal peptide directing secretion; that stretch reads MRTYRYFLLLFWVGQPYP. Residues 19 to 53 constitute a propeptide that is removed on maturation; sequence TFSNPLSKRTSGFPAKRKALELSANSRNELSRSKR. Cadherin domains are found at residues 54–159, 160–268, 269–383, 384–486, and 487–608; these read SWMW…EPIF, TKDV…PPRF, PQST…PPVF, SKLA…DNAP, and EFAE…LIHP. Over 54–615 the chain is Extracellular; it reads SWMWNQFFLL…IHPTGLSTGA (562 aa). N-linked (GlcNAc...) asparagine glycosylation is present at Asn-255. The segment at 260-291 is disordered; that stretch reads DVNDNPPRFPQSTYQFKTPESSPPGTPIGRIK. Positions 269–279 are enriched in polar residues; the sequence is PQSTYQFKTPE. N-linked (GlcNAc...) asparagine glycosylation is found at Asn-399, Asn-437, Asn-455, and Asn-536. Residues 616–636 traverse the membrane as a helical segment; it reads LVAILLCIVILLVTVVLFAAL. Topologically, residues 637 to 790 are cytoplasmic; the sequence is RRQRKKEPLI…YGGMDSDKDS (154 aa). 2 positions are modified to phosphoserine: Ser-786 and Ser-790.

The protein resides in the cell membrane. Its function is as follows. Cadherins are calcium-dependent cell adhesion proteins. They preferentially interact with themselves in a homophilic manner in connecting cells; cadherins may thus contribute to the sorting of heterogeneous cell types. The sequence is that of Cadherin-6 (Cdh6) from Mus musculus (Mouse).